We begin with the raw amino-acid sequence, 183 residues long: Myelin-associated oligodendrocyte basic protein (183 aa).

The interval 68-183 is disordered; that stretch reads TRTSRRAKSP…GSPVKASRFW (116 aa). The span at 69-78 shows a compositional bias: basic residues; that stretch reads RTSRRAKSPQ. Positions 79–96 are enriched in low complexity; it reads RPKQQPAAPPAVVRAPAK. Repeat copies occupy residues 97 to 106, 107 to 116, 117 to 126, and 127 to 136. The 4 X 10 AA tandem repeats of P-R-S-P-P-R-S-E-R-Q stretch occupies residues 97–136; sequence PRSPPRSERQPRSPPRSERQPRSPPRSERQPRSPPRSERQ. Phosphoserine occurs at positions 99 and 109. Residues 101–143 are compositionally biased toward basic and acidic residues; the sequence is PRSERQPRSPPRSERQPRSPPRSERQPRSPPRSERQPRPRPEV. The segment covering 151 to 164 has biased composition (low complexity); it reads RPPQKSKQQPRSSP.

The protein resides in the cytoplasm. It is found in the perinuclear region. May play a role in compacting or stabilizing the myelin sheath, possibly by binding the negatively charged acidic phospholipids of the cytoplasmic membrane. The chain is Myelin-associated oligodendrocyte basic protein (MOBP) from Homo sapiens (Human).